We begin with the raw amino-acid sequence, 269 residues long: 4-hydroxy-tetrahydrodipicolinate reductase (269 aa).

Residues 13-18 and Asp-39 each bind NAD(+); that span reads GASGRM. An NADP(+)-binding site is contributed by Arg-40. NAD(+) contacts are provided by residues 101–103 and 125–128; these read GTT and APNM. His-158 functions as the Proton donor/acceptor in the catalytic mechanism. His-159 serves as a coordination point for (S)-2,3,4,5-tetrahydrodipicolinate. Lys-162 serves as the catalytic Proton donor. 168–169 contacts (S)-2,3,4,5-tetrahydrodipicolinate; the sequence is GT.

Belongs to the DapB family.

The protein localises to the cytoplasm. The enzyme catalyses (S)-2,3,4,5-tetrahydrodipicolinate + NAD(+) + H2O = (2S,4S)-4-hydroxy-2,3,4,5-tetrahydrodipicolinate + NADH + H(+). It catalyses the reaction (S)-2,3,4,5-tetrahydrodipicolinate + NADP(+) + H2O = (2S,4S)-4-hydroxy-2,3,4,5-tetrahydrodipicolinate + NADPH + H(+). Its pathway is amino-acid biosynthesis; L-lysine biosynthesis via DAP pathway; (S)-tetrahydrodipicolinate from L-aspartate: step 4/4. Catalyzes the conversion of 4-hydroxy-tetrahydrodipicolinate (HTPA) to tetrahydrodipicolinate. The chain is 4-hydroxy-tetrahydrodipicolinate reductase from Bordetella pertussis (strain Tohama I / ATCC BAA-589 / NCTC 13251).